The following is an 84-amino-acid chain: Small ribosomal subunit protein uS17 (84 aa).

The protein belongs to the universal ribosomal protein uS17 family. Part of the 30S ribosomal subunit.

Its function is as follows. One of the primary rRNA binding proteins, it binds specifically to the 5'-end of 16S ribosomal RNA. In Actinobacillus pleuropneumoniae serotype 5b (strain L20), this protein is Small ribosomal subunit protein uS17.